A 477-amino-acid polypeptide reads, in one-letter code: Adenosylhomocysteinase (477 aa).

Positions 63, 142, and 202 each coordinate substrate. 203 to 205 (TTT) provides a ligand contact to NAD(+). Substrate-binding residues include Lys-232 and Asp-236. NAD(+) is bound by residues Asn-237, 266-271 (GYGDVG), Glu-289, Asn-324, 345-347 (IGH), and Asn-390.

The protein belongs to the adenosylhomocysteinase family. Requires NAD(+) as cofactor.

It localises to the cytoplasm. It catalyses the reaction S-adenosyl-L-homocysteine + H2O = L-homocysteine + adenosine. It participates in amino-acid biosynthesis; L-homocysteine biosynthesis; L-homocysteine from S-adenosyl-L-homocysteine: step 1/1. May play a key role in the regulation of the intracellular concentration of adenosylhomocysteine. In Methylibium petroleiphilum (strain ATCC BAA-1232 / LMG 22953 / PM1), this protein is Adenosylhomocysteinase.